Here is a 473-residue protein sequence, read N- to C-terminus: MQPFIHENFLLQNKHAEVLYHDYAKSLPIIDYHCHLSAKEIAEDRRFHDMTELWLEGDHYKWRAMRALGVEEKYITGNASPEEKFQAWAKTVPYCIGNPLYHWTHLELKRYFQVDALLNERTWREIWNHCNDLLRQEGFSARSFMVKSNVEWIGTTDDPLDDLADHQAIAQDPSFLVKIVPSFRPDAVIEINRPSFLDYVGKLGEALACRFMITISCCKPLENRVRYFHEKGCRMADHGLESMPYSECGWKEANDIFQKRKNGFVLSREEEEKYKTSTLCFLARLYHSLGWVMQLHIGSIRNTNEKMFRRLGPNTGYDSIHDFFLAQPLNAFLNELERRDQLPKTIVYTLNPAYNYVVASTVGNFQSEGVKGKVPIWRSLGGFNDSFKMAFIRHLTDLANVGVFSTFVGMLTDSRSFVSYVRHEYFRRIVCNLIGSWIEKGEVPQDYDFLGKIVQDVCYFNAKQYFQVGVSGG.

Belongs to the metallo-dependent hydrolases superfamily. Uronate isomerase family.

The catalysed reaction is D-glucuronate = D-fructuronate. The enzyme catalyses aldehydo-D-galacturonate = keto-D-tagaturonate. It functions in the pathway carbohydrate metabolism; pentose and glucuronate interconversion. The polypeptide is Uronate isomerase (uxaC) (Geobacillus stearothermophilus (Bacillus stearothermophilus)).